A 467-amino-acid chain; its full sequence is 2-succinylbenzoate--CoA ligase (467 aa).

Belongs to the ATP-dependent AMP-binding enzyme family. MenE subfamily.

The catalysed reaction is 2-succinylbenzoate + ATP + CoA = 2-succinylbenzoyl-CoA + AMP + diphosphate. It participates in quinol/quinone metabolism; 1,4-dihydroxy-2-naphthoate biosynthesis; 1,4-dihydroxy-2-naphthoate from chorismate: step 5/7. Its pathway is quinol/quinone metabolism; menaquinone biosynthesis. Converts 2-succinylbenzoate (OSB) to 2-succinylbenzoyl-CoA (OSB-CoA). The sequence is that of 2-succinylbenzoate--CoA ligase from Listeria innocua serovar 6a (strain ATCC BAA-680 / CLIP 11262).